We begin with the raw amino-acid sequence, 207 residues long: Cytidylyl-2-hydroxypropylphosphonate hydrolase (207 aa).

Residues tryptophan 68, arginine 74, glutamine 76, and serine 77 each contribute to the CDP site. Residues asparagine 109, aspartate 125, glutamate 127, and aspartate 129 each coordinate a divalent metal cation. A CDP-binding site is contributed by lysine 142. Lysine 142 (proton donor) is an active-site residue. Aspartate 143 contributes to the a divalent metal cation binding site.

The protein belongs to the FomD family. Requires Mn(2+) as cofactor. It depends on Co(2+) as a cofactor.

The enzyme catalyses cytidine 5'-({hydroxy[(S)-2-hydroxypropyl]phosphonoyl}phosphate) + H2O = (S)-2-hydroxypropylphosphonate + CMP + H(+). The protein operates within antibiotic biosynthesis; fosfomycin biosynthesis. Hydrolysis of (S)-HPP-CMP is inhibited by CDP. Involved in fosfomycin biosynthesis. Catalyzes the hydrolysis of cytidylyl (S)-2-hydroxypropylphosphonate ((S)-HPP-CMP) to give (S)-2-hydroxypropylphosphonate ((S)-HPP) and CMP. Can also hydrolyze (R)-HPP-CMP and cytidylyl 2-hydroxyethylphosphonate (HEP-CMP), which is a biosynthetic intermediate before C-methylation, but the catalytic efficiency is much higher with (S)-HPP-CMP. In Streptomyces fradiae (Streptomyces roseoflavus), this protein is Cytidylyl-2-hydroxypropylphosphonate hydrolase.